The primary structure comprises 66 residues: Ranalexin (66 aa).

The first 20 residues, 1–20 (MFTLKKSLLLLFFLGTINLS), serve as a signal peptide directing secretion. The propeptide at 21-44 (LCEEERNAEEERRDNPDERDVEVE) is small acidic peptide. A disulfide bond links Cys60 and Cys66.

Belongs to the frog skin active peptide (FSAP) family. Brevinin subfamily. As to expression, expressed by the skin dorsal glands.

It is found in the secreted. In terms of biological role, potent microbicidal activity, active against S.aureus and E.coli. It also acts as a membrane-disruptive agent at higher concentrations. This chain is Ranalexin, found in Aquarana catesbeiana (American bullfrog).